Consider the following 365-residue polypeptide: Phosphate acyltransferase (365 aa).

Belongs to the PlsX family. Homodimer. Probably interacts with PlsY.

It localises to the cytoplasm. The catalysed reaction is a fatty acyl-[ACP] + phosphate = an acyl phosphate + holo-[ACP]. It functions in the pathway lipid metabolism; phospholipid metabolism. Catalyzes the reversible formation of acyl-phosphate (acyl-PO(4)) from acyl-[acyl-carrier-protein] (acyl-ACP). This enzyme utilizes acyl-ACP as fatty acyl donor, but not acyl-CoA. This chain is Phosphate acyltransferase, found in Picosynechococcus sp. (strain ATCC 27264 / PCC 7002 / PR-6) (Agmenellum quadruplicatum).